A 147-amino-acid polypeptide reads, in one-letter code: NADH-ubiquinone oxidoreductase chain 3 (147 aa).

A run of 3 helical transmembrane segments spans residues 6–26 (LFILFVSIIALLFLLINLVFA), 60–80 (AICFVILDLEIFTMFPYVGSL), and 84–104 (TFYSLVVILGFMFVVSAGFVF).

The protein belongs to the complex I subunit 3 family.

Its subcellular location is the mitochondrion membrane. It catalyses the reaction a ubiquinone + NADH + 5 H(+)(in) = a ubiquinol + NAD(+) + 4 H(+)(out). Functionally, core subunit of the mitochondrial membrane respiratory chain NADH dehydrogenase (Complex I) that is believed to belong to the minimal assembly required for catalysis. Complex I functions in the transfer of electrons from NADH to the respiratory chain. The immediate electron acceptor for the enzyme is believed to be ubiquinone. This chain is NADH-ubiquinone oxidoreductase chain 3 (ndh-3), found in Neurospora crassa (strain ATCC 24698 / 74-OR23-1A / CBS 708.71 / DSM 1257 / FGSC 987).